The sequence spans 279 residues: Sulfur carrier protein FdhD (279 aa).

Cysteine 112 serves as the catalytic Cysteine persulfide intermediate.

The protein belongs to the FdhD family.

Its subcellular location is the cytoplasm. Its function is as follows. Required for formate dehydrogenase (FDH) activity. Acts as a sulfur carrier protein that transfers sulfur from IscS to the molybdenum cofactor prior to its insertion into FDH. This is Sulfur carrier protein FdhD from Nocardia farcinica (strain IFM 10152).